We begin with the raw amino-acid sequence, 234 residues long: MALPWCLKTGVLTSPAAGFNHPSDSGFAVPTKLLSIRKGDRERLRIQAVFSFPPRNGGAEKRKQLKHELVEAIEPLERGATASPDDQLLIDQLARKVEAVNPTKEPLKSDLINGKWELIYTTSAAILQAKKPRFLRSLTNYQCINMDTLKVQRMETWPFYNSVTGDLTPLNSKTVAVKLQVFKILGFIPVKAPDGTARGELEITYVDEELRISRGKGNLLFILKMFDPTYRIPL.

A chloroplast-targeting transit peptide spans 1 to 45 (MALPWCLKTGVLTSPAAGFNHPSDSGFAVPTKLLSIRKGDRERLR).

This sequence belongs to the PAP/fibrillin family.

Its subcellular location is the plastid. The protein resides in the chloroplast thylakoid. This chain is Probable plastid-lipid-associated protein 5, chloroplastic (PAP5), found in Arabidopsis thaliana (Mouse-ear cress).